The sequence spans 146 residues: NADH-quinone oxidoreductase subunit A (146 aa).

Transmembrane regions (helical) follow at residues 14–34, 68–88, and 96–116; these read FGLFLIIAVGLCVFMLTGGFL, LVAMFFVIFDVEALYLYAWAV, and IGFIEATIFILVLLAGLIYLV.

This sequence belongs to the complex I subunit 3 family. In terms of assembly, NDH-1 is composed of 13 different subunits. Subunits NuoA, H, J, K, L, M, N constitute the membrane sector of the complex.

The protein localises to the cell inner membrane. It catalyses the reaction a quinone + NADH + 5 H(+)(in) = a quinol + NAD(+) + 4 H(+)(out). Functionally, NDH-1 shuttles electrons from NADH, via FMN and iron-sulfur (Fe-S) centers, to quinones in the respiratory chain. The immediate electron acceptor for the enzyme in this species is believed to be ubiquinone. Couples the redox reaction to proton translocation (for every two electrons transferred, four hydrogen ions are translocated across the cytoplasmic membrane), and thus conserves the redox energy in a proton gradient. In Pectobacterium carotovorum subsp. carotovorum (Erwinia carotovora subsp. carotovora), this protein is NADH-quinone oxidoreductase subunit A.